A 1169-amino-acid polypeptide reads, in one-letter code: Flocculation protein FLO10 (1169 aa).

The first 24 residues, 1 to 24, serve as a signal peptide directing secretion; sequence MPVAARYIFLTGLFLLSVANVALG. A PA14 domain is found at 111 to 271; it reads PVKRGVKLCS…GTEVNDDFEG (161 aa). Residues Asn-122, Asn-157, and Asn-279 are each glycosylated (N-linked (GlcNAc...) asparagine). A run of 10 repeats spans residues 303–326, 330–356, 357–383, 384–419, 420–446, 447–482, 483–509, 510–545, 546–572, and 573–608. The interval 303-572 is 6 X 27 AA approximate repeats, Ser/Thr-rich; the sequence is SSWSSSEVCT…TSYVTPYVSS (270 aa). Positions 384–608 are 4 X 36 AA approximate repeats, Ser/Thr-rich; it reads STAAANYTSS…TSTSTPYATS (225 aa). Asn-389 carries an N-linked (GlcNAc...) asparagine glycan. Asn-452 carries an N-linked (GlcNAc...) asparagine glycan. Asn-515 carries an N-linked (GlcNAc...) asparagine glycan. N-linked (GlcNAc...) asparagine glycosylation is found at Asn-578, Asn-656, and Asn-686. Residues 798-819 are compositionally biased toward low complexity; that stretch reads TKVSSSESSESHRTSPTTSSES. Disordered regions lie at residues 798–837, 856–920, and 1070–1107; these read TKVS…SSFS, TPSS…SRDR, and RNNN…EAVS. The segment covering 856–884 has biased composition (polar residues); it reads TPSSPISTVAPRSTGLNSQTESTNSSKET. An N-linked (GlcNAc...) asparagine glycan is attached at Asn-879. Positions 886–902 are enriched in low complexity; that stretch reads SSENSASVMPSSSATSP. The span at 906-916 shows a compositional bias: polar residues; sequence KVTSDETSSGF. The segment covering 1077–1107 has biased composition (low complexity); that stretch reads TSGTTSIETHTTTTSNASENSDNVSASEAVS. N-linked (GlcNAc...) asparagine glycosylation is found at Asn-1092 and Asn-1099. Residue Gly-1146 is the site of GPI-anchor amidated glycine attachment. The propeptide at 1147 to 1169 is removed in mature form; it reads IANHLLTNSGISIFIASLLLAIV.

It belongs to the flocculin family. Extensively O-glycosylated. Post-translationally, the GPI-anchor is attached to the protein in the endoplasmic reticulum and serves to target the protein to the cell surface. There, the glucosamine-inositol phospholipid moiety is cleaved off and the GPI-modified mannoprotein is covalently attached via its lipidless GPI glycan remnant to the 1,6-beta-glucan of the outer cell wall layer.

It localises to the secreted. The protein resides in the cell wall. It is found in the membrane. Its function is as follows. Cell wall protein that participates directly in adhesive cell-cell interactions during yeast flocculation, a reversible, asexual and Ca(2+)-dependent process in which cells adhere to form aggregates (flocs) consisting of thousands of cells. The lectin-like protein sticks out of the cell wall of flocculent cells and selectively binds mannose residues in the cell walls of adjacent cells. Activity is inhibited by mannose, glucose, maltose and sucrose. Also involved in cell-substrate adhesion, haploid invasive growth and diploid pseudohyphae formation. In Saccharomyces cerevisiae (strain ATCC 204508 / S288c) (Baker's yeast), this protein is Flocculation protein FLO10 (FLO10).